Reading from the N-terminus, the 441-residue chain is 23S rRNA (uracil(1939)-C(5))-methyltransferase RlmD (441 aa).

The TRAM domain maps to 1 to 56 (MSIDSLDMEARGVGRLLNEDGTPGKVIFVEGALPGETVSYRSFRRKPSYEQAHLVE). Residues Cys69, Cys75, Cys78, and Cys157 each contribute to the [4Fe-4S] cluster site. Residues Gln265, Phe294, Asn299, Glu315, Asn343, and Asp364 each coordinate S-adenosyl-L-methionine. The Nucleophile role is filled by Cys397.

The protein belongs to the class I-like SAM-binding methyltransferase superfamily. RNA M5U methyltransferase family. RlmD subfamily.

The catalysed reaction is uridine(1939) in 23S rRNA + S-adenosyl-L-methionine = 5-methyluridine(1939) in 23S rRNA + S-adenosyl-L-homocysteine + H(+). In terms of biological role, catalyzes the formation of 5-methyl-uridine at position 1939 (m5U1939) in 23S rRNA. The protein is 23S rRNA (uracil(1939)-C(5))-methyltransferase RlmD of Cupriavidus necator (strain ATCC 17699 / DSM 428 / KCTC 22496 / NCIMB 10442 / H16 / Stanier 337) (Ralstonia eutropha).